A 306-amino-acid polypeptide reads, in one-letter code: Pantothenate kinase (306 aa).

90-97 (GSVAVGKS) is an ATP binding site.

This sequence belongs to the prokaryotic pantothenate kinase family.

It localises to the cytoplasm. It catalyses the reaction (R)-pantothenate + ATP = (R)-4'-phosphopantothenate + ADP + H(+). Its pathway is cofactor biosynthesis; coenzyme A biosynthesis; CoA from (R)-pantothenate: step 1/5. This chain is Pantothenate kinase (coaA), found in Lactococcus lactis subsp. lactis (strain IL1403) (Streptococcus lactis).